We begin with the raw amino-acid sequence, 311 residues long: Sulfate adenylyltransferase subunit 2 (311 aa).

It belongs to the PAPS reductase family. CysD subfamily. Heterodimer composed of CysD, the smaller subunit, and CysN.

The catalysed reaction is sulfate + ATP + H(+) = adenosine 5'-phosphosulfate + diphosphate. The protein operates within sulfur metabolism; hydrogen sulfide biosynthesis; sulfite from sulfate: step 1/3. With CysN forms the ATP sulfurylase (ATPS) that catalyzes the adenylation of sulfate producing adenosine 5'-phosphosulfate (APS) and diphosphate, the first enzymatic step in sulfur assimilation pathway. APS synthesis involves the formation of a high-energy phosphoric-sulfuric acid anhydride bond driven by GTP hydrolysis by CysN coupled to ATP hydrolysis by CysD. The protein is Sulfate adenylyltransferase subunit 2 of Methylobacterium sp. (strain 4-46).